The chain runs to 271 residues: Probable ribosomal RNA small subunit methyltransferase A (271 aa).

S-adenosyl-L-methionine contacts are provided by Asn-22, Leu-24, Gly-49, Glu-70, Asp-97, and Asn-112.

This sequence belongs to the class I-like SAM-binding methyltransferase superfamily. rRNA adenine N(6)-methyltransferase family. RsmA subfamily.

It localises to the cytoplasm. Its function is as follows. Specifically dimethylates two adjacent adenosines in the loop of a conserved hairpin near the 3'-end of 16S rRNA in the 30S particle. May play a critical role in biogenesis of 30S subunits. This is Probable ribosomal RNA small subunit methyltransferase A from Methanosphaera stadtmanae (strain ATCC 43021 / DSM 3091 / JCM 11832 / MCB-3).